Here is an 88-residue protein sequence, read N- to C-terminus: MAHKKGTGSTRNGRDSNSKRLGVKAYGGEPVTAGSILIRQRGTSVLPGINVGKGKDDTLFALTDGIVTFETIRRGLKNRKRISVALTS.

A disordered region spans residues 1–26; the sequence is MAHKKGTGSTRNGRDSNSKRLGVKAY.

It belongs to the bacterial ribosomal protein bL27 family.

This Prochlorococcus marinus (strain MIT 9211) protein is Large ribosomal subunit protein bL27.